We begin with the raw amino-acid sequence, 661 residues long: MKKFKLVSDFKPTGDQPKAIEMLTEGILKGEKFQTLLGVTGSGKTFTMAKVIENVQRPTLVLAHNKTLAAQLCSEFREFFPENAVEFFVSYYDYYQPEAYIPETDTYIEKDSSINEEIDKLRHSATSALFERRDVIIVASVSCIYSLGSPEDYLNLTISLRPGMTKDRDEVIRDLIRMQYERNDIDFRRGRFRVRGDVLEVFPASNTDRAIRIEFFGDEIERITEFDVVTGEVIGRRNHVAIFPASHYVTTAEKLKRAIKSIEEELEQRLKELRSMGKLVEAQRLEQRTRYDIEMLQEMGFCKGIENYSRHLTGRPPGSPPYTLLDYFPNDFIMFIDESHVTIPQVRAMYNGDKARKDTLVEYGFRLPSAYDNRPLTFEEFEEKLNQVIFVSATPGPYELKKSSRIVEQIIRPTGLVDPEIEVHPVQGQIDHLIGEIRKRVEKNQRVLVTTLTKKMAESLTEYLKDVGIRVRYMHSDIDTIERMQIIRDLRLGKFDVLVGINLLREGLDLPEVSLVAILDADKEGFLRSETSLIQTIGRAARNVDGKVIMYADRITNAMQKAIDETNRRRKIQIEYNQKHGIVPQTVRKGIRQIIEATVSVAEEEEKYEVVEKEIVENMTKEEIEEYIKELEQEMKKLAIELEFEKAAKVRDKIFELKKLL.

Residues 25-178 (EGILKGEKFQ…DEVIRDLIRM (154 aa)) enclose the Helicase ATP-binding domain. 38-45 (GVTGSGKT) is an ATP binding site. A Beta-hairpin motif is present at residues 91–114 (YYDYYQPEAYIPETDTYIEKDSSI). One can recognise a Helicase C-terminal domain in the interval 429-591 (QIDHLIGEIR…IVPQTVRKGI (163 aa)). A UVR domain is found at 625 to 660 (EEYIKELEQEMKKLAIELEFEKAAKVRDKIFELKKL).

It belongs to the UvrB family. Forms a heterotetramer with UvrA during the search for lesions. Interacts with UvrC in an incision complex.

Its subcellular location is the cytoplasm. Functionally, the UvrABC repair system catalyzes the recognition and processing of DNA lesions. A damage recognition complex composed of 2 UvrA and 2 UvrB subunits scans DNA for abnormalities. Upon binding of the UvrA(2)B(2) complex to a putative damaged site, the DNA wraps around one UvrB monomer. DNA wrap is dependent on ATP binding by UvrB and probably causes local melting of the DNA helix, facilitating insertion of UvrB beta-hairpin between the DNA strands. Then UvrB probes one DNA strand for the presence of a lesion. If a lesion is found the UvrA subunits dissociate and the UvrB-DNA preincision complex is formed. This complex is subsequently bound by UvrC and the second UvrB is released. If no lesion is found, the DNA wraps around the other UvrB subunit that will check the other stand for damage. The protein is UvrABC system protein B of Caldicellulosiruptor bescii (strain ATCC BAA-1888 / DSM 6725 / KCTC 15123 / Z-1320) (Anaerocellum thermophilum).